We begin with the raw amino-acid sequence, 332 residues long: Ectoine dioxygenase (332 aa).

The span at 1–10 (MSVQTSSNRP) shows a compositional bias: polar residues. The interval 1 to 47 (MSVQTSSNRPLPQANLHIATETPEADSRIRSAPRPGQDPYPTRLSEP) is disordered. Gln-163 is a binding site for L-ectoine. Lys-169 contacts 2-oxoglutarate. Positions 180, 182, and 281 each coordinate Fe cation.

Belongs to the PhyH family. EctD subfamily. In terms of assembly, homodimer. Requires Fe(2+) as cofactor.

The catalysed reaction is L-ectoine + 2-oxoglutarate + O2 = 5-hydroxyectoine + succinate + CO2. Involved in the biosynthesis of 5-hydroxyectoine, called compatible solute, which helps organisms to survive extreme osmotic stress by acting as a highly soluble organic osmolyte. Catalyzes the 2-oxoglutarate-dependent selective hydroxylation of L-ectoine to yield (4S,5S)-5-hydroxyectoine. This chain is Ectoine dioxygenase, found in Halomonas elongata (strain ATCC 33173 / DSM 2581 / NBRC 15536 / NCIMB 2198 / 1H9).